The sequence spans 235 residues: Phosphoribosylaminoimidazole-succinocarboxamide synthase (235 aa).

This sequence belongs to the SAICAR synthetase family.

The enzyme catalyses 5-amino-1-(5-phospho-D-ribosyl)imidazole-4-carboxylate + L-aspartate + ATP = (2S)-2-[5-amino-1-(5-phospho-beta-D-ribosyl)imidazole-4-carboxamido]succinate + ADP + phosphate + 2 H(+). Its pathway is purine metabolism; IMP biosynthesis via de novo pathway; 5-amino-1-(5-phospho-D-ribosyl)imidazole-4-carboxamide from 5-amino-1-(5-phospho-D-ribosyl)imidazole-4-carboxylate: step 1/2. In Clostridium novyi (strain NT), this protein is Phosphoribosylaminoimidazole-succinocarboxamide synthase.